An 88-amino-acid chain; its full sequence is Apolipoprotein C-I (88 aa).

Positions 1-26 (MRLFIALPVLIVVVAMALEGPAPAQA) are cleaved as a signal peptide.

This sequence belongs to the apolipoprotein C1 family.

It is found in the secreted. Its function is as follows. Inhibitor of lipoprotein binding to the low density lipoprotein (LDL) receptor, LDL receptor-related protein, and very low density lipoprotein (VLDL) receptor. Associates with high density lipoproteins (HDL) and the triacylglycerol-rich lipoproteins in the plasma and makes up about 10% of the protein of the VLDL and 2% of that of HDL. Appears to interfere directly with fatty acid uptake and is also the major plasma inhibitor of cholesteryl ester transfer protein (CETP). Binds free fatty acids and reduces their intracellular esterification. Modulates the interaction of APOE with beta-migrating VLDL and inhibits binding of beta-VLDL to the LDL receptor-related protein. The protein is Apolipoprotein C-I (Apoc1) of Rattus norvegicus (Rat).